We begin with the raw amino-acid sequence, 244 residues long: Claudin-12 (244 aa).

At 1-10 (MGCRDVHAAT) the chain is on the cytoplasmic side. A helical membrane pass occupies residues 11-31 (VLSFLCGIASVAGLFAGTLLP). Residues 32 to 87 (NWRKLRLITFNRNEKNLTVYTGLWVKCARYDGSSDCLMYDTTWYSSVDQLDLRVLQ) are Extracellular-facing. A helical transmembrane segment spans residues 88 to 108 (FALPLSMLIAMGALLLCLIGM). Residues 109–135 (CNTAFRSSVPNIKLAKCLVNSAGCHLV) are Cytoplasmic-facing. The helical transmembrane segment at 136–156 (AGLLFFLAGTVSLSPSIWVIF) threads the bilayer. The Extracellular portion of the chain corresponds to 157–174 (YNIHLNKKFEPVFSFDYA). A helical transmembrane segment spans residues 175–195 (VYVTIASAGGLFMTSLILFIW). The Cytoplasmic segment spans residues 196-244 (YCTCKSLPSPFWQPLYSHPPSMHTYSQPYSARSRLSAIEIDIPVVSHTT). Phosphoserine occurs at positions 228 and 231.

Belongs to the claudin family. In terms of assembly, interacts with OCLN.

It is found in the cell junction. The protein resides in the tight junction. Its subcellular location is the cell membrane. In terms of biological role, plays a major role in tight junction-specific obliteration of the intercellular space, through calcium-independent cell-adhesion activity. This chain is Claudin-12 (CLDN12), found in Pongo abelii (Sumatran orangutan).